Reading from the N-terminus, the 822-residue chain is Nuclear factor of activated T-cells, cytoplasmic 1 (822 aa).

Residues 110–115 (PRIEIT) are calcineurin-binding. Residues 118-210 (LGLHHNNGQF…CVSPKTTDPE (93 aa)) form a transactivation domain A (TAD-A) region. Over residues 192 to 206 (PQTSPWQSPCVSPKT) the composition is skewed to polar residues. A disordered region spans residues 192 to 289 (PQTSPWQSPC…HSSPRVSVTD (98 aa)). Tandem repeats lie at residues 195-211 (SPWQ…DPEE) and 225-241 (SPRH…VTEE). Residues 195 to 290 (SPWQSPCVSP…SSPRVSVTDD (96 aa)) form a 3 X SP repeats region. Ser225 and Ser229 each carry phosphoserine. Low complexity predominate over residues 225 to 242 (SPRHSPSTSPRTSVTEES). Ser237 is subject to Phosphoserine; by PKA. The Nuclear localization signal motif lies at 257–259 (KRK). Copy 3 of the repeat occupies 274-290 (SPTPSPHSSPRVSVTDD). Ser286 carries the phosphoserine; by PKA modification. The Nuclear export signal motif lies at 302-313 (SAIVAAINALST). In terms of domain architecture, RHD spans 400-582 (PSLPALDWQL…NPIECSQRSA (183 aa)). Residues 429 to 436 (RAHYETEG) mediate DNA binding. The Nuclear localization signal signature appears at 672-674 (KRK). Residues 772–822 (GPGHLGLQRPAGGVLGGQEAPRPGGPHPGAPQLHPLNLSQSIVTRLTEPQP) are disordered. Positions 808–822 (NLSQSIVTRLTEPQP) are enriched in polar residues.

In terms of assembly, member of the multicomponent NFATC transcription complex that consists of at least two components, a pre-existing cytoplasmic component NFATC2 and an inducible nuclear component NFATC1. Other members such as NFATC4, NFATC3 or members of the activating protein-1 family, MAF, GATA4 and Cbp/p300 can also bind the complex. NFATC proteins bind to DNA as monomers. Interacts with HOMER2 and HOMER3; this interaction may compete with calcineurin/PPP3CA-binding and hence prevent NFATC1 dephosphorylation and activation. Interacts with TLE6/GRG6. Phosphorylated by NFATC-kinase and GSK3B; phosphorylation induces NFATC1 nuclear exit and dephosphorylation by calcineurin promotes nuclear import. Phosphorylation by PKA and DYRK2 negatively modulates nuclear accumulation, and promotes subsequent phosphorylation by GSK3B or casein kinase 1.

It localises to the cytoplasm. The protein localises to the nucleus. Functionally, plays a role in the inducible expression of cytokine genes in T-cells, especially in the induction of the IL-2 or IL-4 gene transcription. Also controls gene expression in embryonic cardiac cells. Could regulate not only the activation and proliferation but also the differentiation and programmed death of T-lymphocytes as well as lymphoid and non-lymphoid cells. Required for osteoclastogenesis and regulates many genes important for osteoclast differentiation and function. This Sus scrofa (Pig) protein is Nuclear factor of activated T-cells, cytoplasmic 1 (NFATC1).